We begin with the raw amino-acid sequence, 397 residues long: Succinyl-diaminopimelate desuccinylase (397 aa).

His-73 is a Zn(2+) binding site. Residue Asp-75 is part of the active site. Residue Asp-106 participates in Zn(2+) binding. Residue Glu-140 is the Proton acceptor of the active site. Zn(2+) contacts are provided by Glu-141, Glu-169, and His-366.

This sequence belongs to the peptidase M20A family. DapE subfamily. Homodimer. Zn(2+) is required as a cofactor. It depends on Co(2+) as a cofactor.

It catalyses the reaction N-succinyl-(2S,6S)-2,6-diaminopimelate + H2O = (2S,6S)-2,6-diaminopimelate + succinate. It participates in amino-acid biosynthesis; L-lysine biosynthesis via DAP pathway; LL-2,6-diaminopimelate from (S)-tetrahydrodipicolinate (succinylase route): step 3/3. In terms of biological role, catalyzes the hydrolysis of N-succinyl-L,L-diaminopimelic acid (SDAP), forming succinate and LL-2,6-diaminopimelate (DAP), an intermediate involved in the bacterial biosynthesis of lysine and meso-diaminopimelic acid, an essential component of bacterial cell walls. The sequence is that of Succinyl-diaminopimelate desuccinylase from Rhizobium johnstonii (strain DSM 114642 / LMG 32736 / 3841) (Rhizobium leguminosarum bv. viciae).